Here is a 228-residue protein sequence, read N- to C-terminus: MKPTRPFHQTPVITIDGPTASGKGTVAALVAAELGFHLLDSGALYRLAALASVRYDIAADDAEALAKLVGELHITFREGIAQLDGADVSTDIRAEEIGNRASAIAIHAPVRAALVARQRAFRKQPGLVADGRDMGTVIFPDAALKVFLTASVEARATRRHKQLIQKGFSANMDDLLRDLRERDERDSQRAAAPLKPAADAQLLDTSALSVDQAVEQVVQWYRALVPQS.

ATP is bound at residue 17–25; it reads GPTASGKGT.

Belongs to the cytidylate kinase family. Type 1 subfamily.

It is found in the cytoplasm. It carries out the reaction CMP + ATP = CDP + ADP. The catalysed reaction is dCMP + ATP = dCDP + ADP. The polypeptide is Cytidylate kinase (Paraburkholderia phymatum (strain DSM 17167 / CIP 108236 / LMG 21445 / STM815) (Burkholderia phymatum)).